The primary structure comprises 216 residues: MKYQLTATEARVIGCLLEKQVTTPEQYPLSVNAVTLACNQKSNREPVLNLSEHDVQDHLDALVKRHYLRTVSGFGNRVTKYEQRFCNSEFGDLKFSSAEVAIVTTLLLRGAQTPGELRSRASRMHEFSDMQEVEQTLENLASREDGPFVMRLPREPGKRESRFMHLFSGDVETLVNVAEAVSPVEDESLAARVDALETEVAELKQRLDSLLAHLGE.

This sequence belongs to the UPF0502 family.

This chain is UPF0502 protein Ent638_1581, found in Enterobacter sp. (strain 638).